The primary structure comprises 127 residues: Alpha-hordothionin (127 aa).

Positions 1–18 are cleaved as a signal peptide; sequence MVCLLILGLVLEQVQVEG. 4 disulfides stabilise this stretch: cysteine 21–cysteine 57, cysteine 22–cysteine 49, cysteine 30–cysteine 47, and cysteine 34–cysteine 43. The propeptide at 64-127 is acidic domain; sequence LALVSNSDEP…GDAGLTSLTA (64 aa).

The protein belongs to the plant thionin (TC 1.C.44) family. 4 C-C subfamily.

The protein localises to the secreted. Functionally, thionins are small plant proteins which are toxic to animal cells. They seem to exert their toxic effect at the level of the cell membrane. Their precise function is not known. The sequence is that of Alpha-hordothionin (THI1.1) from Hordeum vulgare (Barley).